Reading from the N-terminus, the 401-residue chain is Tryptophan synthase beta chain (401 aa).

N6-(pyridoxal phosphate)lysine is present on K92.

Belongs to the TrpB family. In terms of assembly, tetramer of two alpha and two beta chains. Requires pyridoxal 5'-phosphate as cofactor.

It carries out the reaction (1S,2R)-1-C-(indol-3-yl)glycerol 3-phosphate + L-serine = D-glyceraldehyde 3-phosphate + L-tryptophan + H2O. It participates in amino-acid biosynthesis; L-tryptophan biosynthesis; L-tryptophan from chorismate: step 5/5. Functionally, the beta subunit is responsible for the synthesis of L-tryptophan from indole and L-serine. The sequence is that of Tryptophan synthase beta chain from Vesicomyosocius okutanii subsp. Calyptogena okutanii (strain HA).